Here is a 308-residue protein sequence, read N- to C-terminus: uncharacterized protein (308 aa).

A signal peptide spans 1–28 (MILMKKFEIILFLFIAVLIFVFGYFVGA).

This is an uncharacterized protein from Methanocaldococcus jannaschii (strain ATCC 43067 / DSM 2661 / JAL-1 / JCM 10045 / NBRC 100440) (Methanococcus jannaschii).